Consider the following 110-residue polypeptide: Nucleoid-associated protein PERMA_0533 (110 aa).

Belongs to the YbaB/EbfC family. As to quaternary structure, homodimer.

The protein localises to the cytoplasm. The protein resides in the nucleoid. Its function is as follows. Binds to DNA and alters its conformation. May be involved in regulation of gene expression, nucleoid organization and DNA protection. The sequence is that of Nucleoid-associated protein PERMA_0533 from Persephonella marina (strain DSM 14350 / EX-H1).